A 93-amino-acid chain; its full sequence is MTDTPDVQPPKIEFPCERYPIKVIGDAGEGFSDLVVEIIRRHAPDLDAETLVVRDSSKGRFLSVQVLITATDVDQLQAIHNDLRATGRVHMVL.

Belongs to the UPF0250 family.

The polypeptide is UPF0250 protein PSPA7_1111 (Pseudomonas paraeruginosa (strain DSM 24068 / PA7) (Pseudomonas aeruginosa (strain PA7))).